Here is a 317-residue protein sequence, read N- to C-terminus: L-lactate dehydrogenase (317 aa).

NAD(+) is bound by residues Val17, Asp38, Lys43, Tyr68, and 82–83 (GV). Position 91 (Arg91) interacts with substrate. NAD(+)-binding positions include Ser104, 121 to 123 (VSN), and Ser146. 123–126 (NPVD) lines the substrate pocket. 151–154 (DTSR) serves as a coordination point for substrate. Beta-D-fructose 1,6-bisphosphate contacts are provided by Lys156 and His171. The active-site Proton acceptor is the His178. Tyr224 bears the Phosphotyrosine mark. Thr233 lines the substrate pocket.

This sequence belongs to the LDH/MDH superfamily. LDH family. As to quaternary structure, homotetramer.

It localises to the cytoplasm. It carries out the reaction (S)-lactate + NAD(+) = pyruvate + NADH + H(+). Its pathway is fermentation; pyruvate fermentation to lactate; (S)-lactate from pyruvate: step 1/1. Its activity is regulated as follows. Allosterically activated by fructose 1,6-bisphosphate (FBP). Functionally, catalyzes the conversion of lactate to pyruvate. The sequence is that of L-lactate dehydrogenase from Clostridium perfringens (strain SM101 / Type A).